Reading from the N-terminus, the 327-residue chain is Ribonucleoside-diphosphate reductase small chain (327 aa).

3 residues coordinate Fe cation: Asp70, Glu101, and His104. Tyr108 is a catalytic residue. The Fe cation site is built by Glu164, Glu198, and His201.

Belongs to the ribonucleoside diphosphate reductase small chain family. Heterotetramer composed of a homodimer of the large subunit (R1) and a homodimer of the small subunit (R2). Larger multisubunit protein complex are also active, composed of (R1)n(R2)n. Fe cation is required as a cofactor.

The enzyme catalyses a 2'-deoxyribonucleoside 5'-diphosphate + [thioredoxin]-disulfide + H2O = a ribonucleoside 5'-diphosphate + [thioredoxin]-dithiol. Its function is as follows. Ribonucleoside-diphosphate reductase holoenzyme provides the precursors necessary for viral DNA synthesis. Allows virus growth in non-dividing cells. Catalyzes the biosynthesis of deoxyribonucleotides from the corresponding ribonucleotides. The chain is Ribonucleoside-diphosphate reductase small chain from Ornithodoros (relapsing fever ticks).